The sequence spans 118 residues: Putative cytochrome P450 family member 4F30 (118 aa).

Residues methionine 1–glycine 64 are disordered. Residues arginine 28 to serine 43 show a composition bias toward polar residues.

The chain is Putative cytochrome P450 family member 4F30 (CYP4F30P) from Homo sapiens (Human).